The following is a 295-amino-acid chain: Nucleotide-binding protein Lxx11490 (295 aa).

19-26 (GMSGAGRS) serves as a coordination point for ATP. 70–73 (DVRG) serves as a coordination point for GTP.

This sequence belongs to the RapZ-like family.

Functionally, displays ATPase and GTPase activities. The sequence is that of Nucleotide-binding protein Lxx11490 from Leifsonia xyli subsp. xyli (strain CTCB07).